An 847-amino-acid chain; its full sequence is Ras GTPase-activating protein 2 (847 aa).

The span at 1–18 (MAAAAPAAAALTEAPAVP) shows a compositional bias: low complexity. Positions 1 to 31 (MAAAAPAAAALTEAPAVPGTAEPETGDEDSR) are disordered. Ala-2 carries the post-translational modification N-acetylalanine. 2 C2 domains span residues 19 to 137 (GTAE…ETWF) and 148 to 288 (VQGK…QAWY). Residues 371-588 (NKLVPFITAV…TDVKKFLDEI (218 aa)) enclose the Ras-GAP domain. Ser-554 is modified (phosphoserine). One can recognise a PH domain in the interval 603–704 (VHLKEGEMYK…WIDMLCRVSR (102 aa)). The segment at 706–742 (NHNRLSSFHPSAYLNGNWLCCQETSEGTPGCKPCTAG) adopts a Btk-type zinc-finger fold. Residues His-714, Cys-725, Cys-726, and Cys-736 each contribute to the Zn(2+) site. A disordered region spans residues 819 to 847 (DEPHEKYRKKRSSSAKYGSKENPIVGKIS).

As to expression, widely expressed. Higher expression in brain, placenta, and kidney.

Its subcellular location is the cell membrane. In terms of biological role, inhibitory regulator of the Ras-cyclic AMP pathway. May bind inositol tetrakisphosphate (IP4) and phospholipids. The protein is Ras GTPase-activating protein 2 (Rasa2) of Rattus norvegicus (Rat).